The following is a 380-amino-acid chain: Succinyl-diaminopimelate desuccinylase (380 aa).

His-71 is a Zn(2+) binding site. Asp-73 is a catalytic residue. A Zn(2+)-binding site is contributed by Asp-104. Residue Glu-138 is the Proton acceptor of the active site. Glu-139, Glu-167, and His-353 together coordinate Zn(2+).

The protein belongs to the peptidase M20A family. DapE subfamily. In terms of assembly, homodimer. It depends on Zn(2+) as a cofactor. Co(2+) serves as cofactor.

The enzyme catalyses N-succinyl-(2S,6S)-2,6-diaminopimelate + H2O = (2S,6S)-2,6-diaminopimelate + succinate. It participates in amino-acid biosynthesis; L-lysine biosynthesis via DAP pathway; LL-2,6-diaminopimelate from (S)-tetrahydrodipicolinate (succinylase route): step 3/3. In terms of biological role, catalyzes the hydrolysis of N-succinyl-L,L-diaminopimelic acid (SDAP), forming succinate and LL-2,6-diaminopimelate (DAP), an intermediate involved in the bacterial biosynthesis of lysine and meso-diaminopimelic acid, an essential component of bacterial cell walls. This is Succinyl-diaminopimelate desuccinylase from Shewanella baltica (strain OS185).